Reading from the N-terminus, the 657-residue chain is MQTPLIDLQDIRKSYGGGDTPEVHVLRGIDLSIHAGEFVAIVGASGSGKSTLMNILGCLDRPTSGEYRFAGENVAGLDTDELAWLRREAFGFVFQGYHLIPSGSAQENVEMPAIYAGIPAAERHARAAALLERLGLASRTGNRPHQLSGGQQQRVSIARALMNGGHIILADEPTGALDSHSGKEVMALLDELASQGHVVILITHDREVAARAKRIIEISDGLIIRDSAKEDPTVQASTNPGALQAVDLRKRLSEGSEASGAWKGELVDAVQAAWRVMWINRFRTALTLLGIIIGVASVVVMLAVGEGSKRQVMAQMGAFGSNIIYLSGAAPNPRTPPGIVTLDEVAALASLPQITRIMPVNGAEAGVRFGNLDHMSYIGGNDTNFPEIFNWPVVEGSYFTEADERNGAAVAVIGKKVRDKLLKDVSNPIGQYILIENVPFQVVGVLAGKGASSGDQDSDNRIAIPYSAASVRLFGTHNPEYVVIAAADARKVHETEMAIEQLMLQLHNGKKDFELTNNAAMIQAEARTQNTLSLMLGSIAAISLLVGGIGVMNIMLMTVRERTREIGIRMATGARQRDILRQFLTEAVMLSVVGGIAGIGLALLVGGVLILSEVAVAFSLVAIAGAFACALITGVVFGFMPARKAARLDPVTALTSE.

The ABC transporter domain maps to 6 to 245; it reads IDLQDIRKSY…ASTNPGALQA (240 aa). ATP is bound at residue 43 to 50; sequence GASGSGKS. Helical transmembrane passes span 285 to 305, 539 to 559, 590 to 610, and 620 to 640; these read ALTLLGIIIGVASVVVMLAVG, IAAISLLVGGIGVMNIMLMTV, LSVVGGIAGIGLALLVGGVLI, and LVAIAGAFACALITGVVFGFM.

This sequence belongs to the ABC transporter superfamily. Macrolide exporter (TC 3.A.1.122) family. Part of the tripartite efflux system PvdRT-OpmQ, which is composed of an inner membrane component with both ATPase and permease domains, PvdT, a periplasmic membrane fusion protein, PvdR, and an outer membrane component, OpmQ.

It is found in the cell inner membrane. Part of the tripartite efflux system PvdRT-OpmQ required for the secretion into the extracellular milieu of the siderophore pyoverdine (PVD), which is involved in iron acquisition. This subunit binds PVD and drives its secretion by hydrolyzing ATP. The system is responsible for export of newly synthesized PVD after the final steps of biosynthesis have taken place in the periplasm. It is also responsible for recycling of PVD after internalization of ferri-PVD into the periplasm by the outer-membrane receptor FpvA and release of iron from PVD, thus making PVD available for new cycles of iron uptake. The sequence is that of Pyoverdine export ATP-binding/permease protein PvdT from Pseudomonas fluorescens (strain Pf0-1).